The chain runs to 211 residues: ATP-dependent dethiobiotin synthetase BioD 2 (211 aa).

13–18 (DIGKTI) lines the ATP pocket. A Mg(2+)-binding site is contributed by Thr17. Lys38 is an active-site residue. Residue Thr42 coordinates substrate. Residues Asp50, 115–118 (EGAG), and 175–176 (NT) contribute to the ATP site. Asp50 and Glu115 together coordinate Mg(2+).

It belongs to the dethiobiotin synthetase family. Homodimer. The cofactor is Mg(2+).

It is found in the cytoplasm. It catalyses the reaction (7R,8S)-7,8-diammoniononanoate + CO2 + ATP = (4R,5S)-dethiobiotin + ADP + phosphate + 3 H(+). The protein operates within cofactor biosynthesis; biotin biosynthesis; biotin from 7,8-diaminononanoate: step 1/2. Catalyzes a mechanistically unusual reaction, the ATP-dependent insertion of CO2 between the N7 and N8 nitrogen atoms of 7,8-diaminopelargonic acid (DAPA, also called 7,8-diammoniononanoate) to form a ureido ring. The chain is ATP-dependent dethiobiotin synthetase BioD 2 from Haemophilus ducreyi (strain 35000HP / ATCC 700724).